The primary structure comprises 535 residues: Cytochrome c oxidase subunit 1 (535 aa).

The helical transmembrane segment at 15–37 (IAILYFIFSTFCGLAGTAMSFII) threads the bilayer. 3 residues coordinate Ca(2+): glutamate 40, alanine 43, and glycine 45. 5 helical membrane-spanning segments follow: residues 58–80 (VLVT…IGGF), 147–169 (LAIF…FIVT), 190–212 (ILIT…TMLL), 238–260 (WFFG…SHIV), and 267–289 (PVFG…FLVW). Histidine 63 contacts Fe(II)-heme a. Histidine 242 is a Cu cation binding site. The segment at residues 242 to 246 (HPEVY) is a cross-link (1'-histidyl-3'-tyrosine (His-Tyr)). Position 246 (tyrosine 246) interacts with O2. Cu cation contacts are provided by histidine 291 and histidine 292. A run of 2 helical transmembrane segments spans residues 304-326 (AYFT…SWLT) and 339-361 (MLYT…VLAN). Mg(2+) is bound by residues histidine 369 and aspartate 370. 2 consecutive transmembrane segments (helical) span residues 376–398 (THFH…YYWS) and 415–437 (FWLI…INGM). Histidine 377 is a binding site for heme a3. Histidine 379 lines the Fe(II)-heme a pocket. Position 442 (proline 442) interacts with Ca(2+). A helical transmembrane segment spans residues 452–474 (NLVSSFGSMMTIMSLMLFTYIIY).

The protein belongs to the heme-copper respiratory oxidase family. As to quaternary structure, component of the cytochrome c oxidase (complex IV, CIV), a multisubunit enzyme composed of a catalytic core of 3 subunits and several supernumerary subunits. The complex exists as a monomer or a dimer and forms supercomplexes (SCs) in the inner mitochondrial membrane with ubiquinol-cytochrome c oxidoreductase (cytochrome b-c1 complex, complex III, CIII). It depends on heme as a cofactor. Cu cation is required as a cofactor.

Its subcellular location is the mitochondrion inner membrane. The enzyme catalyses 4 Fe(II)-[cytochrome c] + O2 + 8 H(+)(in) = 4 Fe(III)-[cytochrome c] + 2 H2O + 4 H(+)(out). Its pathway is energy metabolism; oxidative phosphorylation. Its function is as follows. Component of the cytochrome c oxidase, the last enzyme in the mitochondrial electron transport chain which drives oxidative phosphorylation. The respiratory chain contains 3 multisubunit complexes succinate dehydrogenase (complex II, CII), ubiquinol-cytochrome c oxidoreductase (cytochrome b-c1 complex, complex III, CIII) and cytochrome c oxidase (complex IV, CIV), that cooperate to transfer electrons derived from NADH and succinate to molecular oxygen, creating an electrochemical gradient over the inner membrane that drives transmembrane transport and the ATP synthase. Cytochrome c oxidase is the component of the respiratory chain that catalyzes the reduction of oxygen to water. Electrons originating from reduced cytochrome c in the intermembrane space (IMS) are transferred via the dinuclear copper A center (CU(A)) of subunit 2 and heme A of subunit 1 to the active site in subunit 1, a binuclear center (BNC) formed by heme A3 and copper B (CU(B)). The BNC reduces molecular oxygen to 2 water molecules using 4 electrons from cytochrome c in the IMS and 4 protons from the mitochondrial matrix. The polypeptide is Cytochrome c oxidase subunit 1 (COX1) (Eremothecium gossypii (strain ATCC 10895 / CBS 109.51 / FGSC 9923 / NRRL Y-1056) (Yeast)).